The primary structure comprises 215 residues: Cytokinin riboside 5'-monophosphate phosphoribohydrolase LOG4 (215 aa).

Substrate contacts are provided by residues Glu84, Arg102 to Lys103, Gly119 to Glu125, and Thr131.

The protein belongs to the LOG family. In terms of tissue distribution, expressed in roots and shoots. Detected in root procambium, lateral root primordia, vascular tissues of cotyledons, leaves and stems, shoot apical meristem, axillary buds, young inflorescences, fruit abscission zones and basal part of ovules.

The protein localises to the cytoplasm. The protein resides in the nucleus. It carries out the reaction N(6)-(dimethylallyl)adenosine 5'-phosphate + H2O = N(6)-dimethylallyladenine + D-ribose 5-phosphate. It catalyses the reaction 9-ribosyl-trans-zeatin 5'-phosphate + H2O = trans-zeatin + D-ribose 5-phosphate. Functionally, cytokinin-activating enzyme working in the direct activation pathway. Phosphoribohydrolase that converts inactive cytokinin nucleotides to the biologically active free-base forms. The chain is Cytokinin riboside 5'-monophosphate phosphoribohydrolase LOG4 (LOG4) from Arabidopsis thaliana (Mouse-ear cress).